The primary structure comprises 930 residues: Protocadherin gamma-A4 (930 aa).

The first 27 residues, 1 to 27, serve as a signal peptide directing secretion; that stretch reads MAAPYKSDRRGLIWICIFLGSLCDIRA. 6 Cadherin domains span residues 28-132, 133-241, 242-346, 347-451, 452-561, and 569-682; these read EQIR…APSF, GAQQ…APVF, TQPE…APEV, TVTS…PPTF, THAS…TPEI, and DGST…APID. The Extracellular portion of the chain corresponds to 28–691; the sequence is EQIRYSVPEE…DQEDSDITLY (664 aa). Asn418 and Asn544 each carry an N-linked (GlcNAc...) asparagine glycan. The chain crosses the membrane as a helical span at residues 692 to 712; that stretch reads LVVAVAAVSCVFLAFVIVLLI. Over 713–930 the chain is Cytoplasmic; the sequence is HRLRRWHSTR…KKKSGKKEKK (218 aa). Disordered stretches follow at residues 803-839 and 900-930; these read SSLQ…WPNN and ATLT…KEKK. A compositionally biased stretch (basic residues) spans 920–930; sequence NKKKSGKKEKK.

Its subcellular location is the cell membrane. Its function is as follows. Potential calcium-dependent cell-adhesion protein. May be involved in the establishment and maintenance of specific neuronal connections in the brain. The sequence is that of Protocadherin gamma-A4 from Mus musculus (Mouse).